The sequence spans 582 residues: ATP-dependent lipid A-core flippase (582 aa).

5 helical membrane passes run 16 to 36 (LWPT…ALIL), 64 to 84 (LLWM…TSYI), 153 to 173 (IIGL…ILVV), 253 to 273 (PIIQ…ASFP), and 275 to 295 (VMDS…IALM). Residues 28-310 (IVAGIALILN…LTNVNAQFQR (283 aa)) form the ABC transmembrane type-1 domain. In terms of domain architecture, ABC transporter spans 342-578 (LEFRNVTFTY…HGVYAQLHKM (237 aa)). 376–383 (GRSGSGKS) is a binding site for ATP.

It belongs to the ABC transporter superfamily. Lipid exporter (TC 3.A.1.106) family. As to quaternary structure, homodimer.

The protein localises to the cell inner membrane. It catalyses the reaction ATP + H2O + lipid A-core oligosaccharideSide 1 = ADP + phosphate + lipid A-core oligosaccharideSide 2.. Its function is as follows. Involved in lipopolysaccharide (LPS) biosynthesis. Translocates lipid A-core from the inner to the outer leaflet of the inner membrane. Transmembrane domains (TMD) form a pore in the inner membrane and the ATP-binding domain (NBD) is responsible for energy generation. This Salmonella choleraesuis (strain SC-B67) protein is ATP-dependent lipid A-core flippase.